The sequence spans 317 residues: 2,3-dihydroxyphenylpropionate/2,3-dihydroxicinnamic acid 1,2-dioxygenase (317 aa).

The active-site Proton donor is His115. The Proton acceptor role is filled by His179.

This sequence belongs to the LigB/MhpB extradiol dioxygenase family. In terms of assembly, homotetramer. Fe(2+) serves as cofactor.

It carries out the reaction 3-(2,3-dihydroxyphenyl)propanoate + O2 = (2Z,4E)-2-hydroxy-6-oxonona-2,4-dienedioate + H(+). The catalysed reaction is (2E)-3-(2,3-dihydroxyphenyl)prop-2-enoate + O2 = (2Z,4E,7E)-2-hydroxy-6-oxonona-2,4,7-trienedioate + H(+). The protein operates within aromatic compound metabolism; 3-phenylpropanoate degradation. Functionally, catalyzes the non-heme iron(II)-dependent oxidative cleavage of 2,3-dihydroxyphenylpropionic acid and 2,3-dihydroxicinnamic acid into 2-hydroxy-6-ketononadienedioate and 2-hydroxy-6-ketononatrienedioate, respectively. In Burkholderia vietnamiensis (strain G4 / LMG 22486) (Burkholderia cepacia (strain R1808)), this protein is 2,3-dihydroxyphenylpropionate/2,3-dihydroxicinnamic acid 1,2-dioxygenase.